We begin with the raw amino-acid sequence, 563 residues long: Sulfite reductase [NADPH] hemoprotein beta-component (563 aa).

[4Fe-4S] cluster contacts are provided by C427, C433, C472, and C476. C476 contributes to the siroheme binding site.

It belongs to the nitrite and sulfite reductase 4Fe-4S domain family. In terms of assembly, alpha(8)-beta(8). The alpha component is a flavoprotein, the beta component is a hemoprotein. Requires siroheme as cofactor. [4Fe-4S] cluster serves as cofactor.

It carries out the reaction hydrogen sulfide + 3 NADP(+) + 3 H2O = sulfite + 3 NADPH + 4 H(+). It participates in sulfur metabolism; hydrogen sulfide biosynthesis; hydrogen sulfide from sulfite (NADPH route): step 1/1. In terms of biological role, component of the sulfite reductase complex that catalyzes the 6-electron reduction of sulfite to sulfide. This is one of several activities required for the biosynthesis of L-cysteine from sulfate. The chain is Sulfite reductase [NADPH] hemoprotein beta-component from Acidithiobacillus ferrooxidans (strain ATCC 53993 / BNL-5-31) (Leptospirillum ferrooxidans (ATCC 53993)).